A 64-amino-acid chain; its full sequence is Frontoxin IV (64 aa).

5 cysteine pairs are disulfide-bonded: C3–C24, C6–C11, C17–C41, C45–C57, and C58–C63.

As to expression, expressed by the venom gland.

Its subcellular location is the secreted. Its function is as follows. Produces peripheral paralysis by blocking neuromuscular transmission at the postsynaptic site. Binds to the muscular nicotinic acetylcholine receptor (nAChR). In Micrurus frontalis (Coral snake), this protein is Frontoxin IV.